Here is a 279-residue protein sequence, read N- to C-terminus: NH(3)-dependent NAD(+) synthetase (279 aa).

ATP is bound at residue 40 to 47; the sequence is GLSGGIDS. D46 contributes to the Mg(2+) binding site. R122 serves as a coordination point for deamido-NAD(+). T142 contributes to the ATP binding site. E147 contributes to the Mg(2+) binding site. Deamido-NAD(+) contacts are provided by K155 and D162. Residues K171 and S193 each contribute to the ATP site. 253-254 lines the deamido-NAD(+) pocket; the sequence is HK.

The protein belongs to the NAD synthetase family. In terms of assembly, homodimer.

The catalysed reaction is deamido-NAD(+) + NH4(+) + ATP = AMP + diphosphate + NAD(+) + H(+). It functions in the pathway cofactor biosynthesis; NAD(+) biosynthesis; NAD(+) from deamido-NAD(+) (ammonia route): step 1/1. Catalyzes the ATP-dependent amidation of deamido-NAD to form NAD. Uses ammonia as a nitrogen source. The sequence is that of NH(3)-dependent NAD(+) synthetase from Sulfurisphaera tokodaii (strain DSM 16993 / JCM 10545 / NBRC 100140 / 7) (Sulfolobus tokodaii).